The sequence spans 527 residues: DNA polymerase epsilon subunit 2 (527 aa).

It belongs to the DNA polymerase epsilon subunit B family. Component of the DNA polymerase epsilon complex consisting of four subunits: the catalytic subunit POLE and the accessory subunits POLE2, POLE3 and POLE4.

Its subcellular location is the nucleus. Its function is as follows. Accessory component of the DNA polymerase epsilon complex. Participates in DNA repair and in chromosomal DNA replication. This chain is DNA polymerase epsilon subunit 2 (Pole2), found in Mus musculus (Mouse).